The primary structure comprises 287 residues: PIH1 domain-containing protein 1 (287 aa).

This sequence belongs to the PIH1 family.

It is found in the nucleus. Involved in the assembly of C/D box small nucleolar ribonucleoprotein (snoRNP) particles. Recruits the SWI/SNF complex to the core promoter of rRNA genes and enhances pre-rRNA transcription. Mediates interaction of TELO2 with the R2TP complex which is necessary for the stability of MTOR and SMG1. Positively regulates the assembly and activity of the mTORC1 complex. The protein is PIH1 domain-containing protein 1 (pih1d1) of Danio rerio (Zebrafish).